A 217-amino-acid chain; its full sequence is 3,4-dihydroxy-2-butanone 4-phosphate synthase (217 aa).

D-ribulose 5-phosphate contacts are provided by residues 37-38 (RE), D42, 150-154 (RRGHT), and E174. E38 contributes to the Mg(2+) binding site. H153 serves as a coordination point for Mg(2+).

This sequence belongs to the DHBP synthase family. As to quaternary structure, homodimer. It depends on Mg(2+) as a cofactor. Mn(2+) is required as a cofactor.

It carries out the reaction D-ribulose 5-phosphate = (2S)-2-hydroxy-3-oxobutyl phosphate + formate + H(+). It participates in cofactor biosynthesis; riboflavin biosynthesis; 2-hydroxy-3-oxobutyl phosphate from D-ribulose 5-phosphate: step 1/1. Catalyzes the conversion of D-ribulose 5-phosphate to formate and 3,4-dihydroxy-2-butanone 4-phosphate. This Shewanella sediminis (strain HAW-EB3) protein is 3,4-dihydroxy-2-butanone 4-phosphate synthase.